Consider the following 119-residue polypeptide: C-X-C motif chemokine 17 (119 aa).

The signal sequence occupies residues 1–22 (MKLLASPFLLLLPVMLMSMVFS). The interval 75–100 (CPCDHVKGREKKNRHQKHHRKSQRPS) is disordered. Cystine bridges form between Cys-75–Cys-103 and Cys-77–Cys-110. A compositionally biased stretch (basic residues) spans 82–98 (GREKKNRHQKHHRKSQR).

Belongs to the intercrine alpha (chemokine CxC) family. In terms of processing, likely to undergo an endoproteolytic process to form a four-cysteine-containing mature peptide with a canonical CXC chemokine scaffold after secretion. As to expression, detected in lung, trachea, lung, tongue thyroid, submaxillary gland, epididymis, and uterus tissues and at a lower level in ovary, prostate and in intestinal tissues.

It localises to the secreted. In terms of biological role, chemokine that acts as a chemoattractant for monocytes, macrophages and dendritic cells. Plays a role in angiogenesis and possibly in the development of tumors. Acts as an anti-inflammatory in the stomach. May play a role in the innate defense against infections. Activates the C-X-C chemokine receptor GPR35 to induce a rapid and transient rise in the level of intracellular calcium ions. The polypeptide is C-X-C motif chemokine 17 (Cxcl17) (Mus musculus (Mouse)).